Consider the following 278-residue polypeptide: MSLERALARLTGVPMSTHAPKTRESEEACPVYPHPVVPRLVLEVHRKNNALVGSNTPKMSVMGHLDIACLREHVKSRLSSPNFVGFTVVCLVEHEDMVTHIDLHPHVFQERVCLLRPTSPGITELCCLLSMLENCRDMSPTFLRSIICRARKTHERTPGMDAAFVMHGIETLTATAAFVYELSVDDHFRATPLVMFKLHKAIGDASTPMGGLMKPIYLESFKLESSGENEDDKQTCADPVNIFYCDTIFTKHLENNEVLKYLKMCTLFKPPIVSLFSK.

Belongs to the herpesviridae cytoplasmic envelopment protein 1 family.

It localises to the virion. Its subcellular location is the virion tegument. The protein resides in the host cytoplasm. It is found in the host Golgi apparatus. In terms of biological role, plays a critical role in cytoplasmic virus egress. Participates in the final step of tegumentation and envelope acquisition within the host cytoplasm. This chain is Cytoplasmic envelopment protein 1 (ORF42), found in Homo sapiens (Human).